Here is a 265-residue protein sequence, read N- to C-terminus: DNA repair protein RecO (265 aa).

This sequence belongs to the RecO family.

Functionally, involved in DNA repair and RecF pathway recombination. The chain is DNA repair protein RecO from Mycolicibacterium paratuberculosis (strain ATCC BAA-968 / K-10) (Mycobacterium paratuberculosis).